The primary structure comprises 142 residues: Peptide methionine sulfoxide reductase MsrB (142 aa).

Positions 2–125 constitute a MsrB domain; that stretch reads IKKNKNDLNE…NSAAVQFIPY (124 aa). Residue Cys-114 is the Nucleophile of the active site.

The protein belongs to the MsrB Met sulfoxide reductase family.

The enzyme catalyses L-methionyl-[protein] + [thioredoxin]-disulfide + H2O = L-methionyl-(R)-S-oxide-[protein] + [thioredoxin]-dithiol. The protein is Peptide methionine sulfoxide reductase MsrB of Staphylococcus saprophyticus subsp. saprophyticus (strain ATCC 15305 / DSM 20229 / NCIMB 8711 / NCTC 7292 / S-41).